The chain runs to 291 residues: Small ribosomal subunit protein uS2 (291 aa).

Acidic residues predominate over residues 238 to 247 (DEESGDELDE). A disordered region spans residues 238–291 (DEESGDELDESVSLHEEGREITDYENYTPPEEREYSVNDEGDVFDEDESLYEGR). Basic and acidic residues predominate over residues 249 to 259 (VSLHEEGREIT). Residues 274 to 291 (VNDEGDVFDEDESLYEGR) are compositionally biased toward acidic residues.

The protein belongs to the universal ribosomal protein uS2 family.

This Treponema pallidum (strain Nichols) protein is Small ribosomal subunit protein uS2 (rpsB).